A 1407-amino-acid polypeptide reads, in one-letter code: DNA-directed RNA polymerase subunit beta' (1407 aa).

Zn(2+) is bound by residues C70, C72, C85, and C88. Residues D460, D462, and D464 each contribute to the Mg(2+) site. Residues C814, C888, C895, and C898 each coordinate Zn(2+).

Belongs to the RNA polymerase beta' chain family. As to quaternary structure, the RNAP catalytic core consists of 2 alpha, 1 beta, 1 beta' and 1 omega subunit. When a sigma factor is associated with the core the holoenzyme is formed, which can initiate transcription. Mg(2+) is required as a cofactor. Requires Zn(2+) as cofactor.

It catalyses the reaction RNA(n) + a ribonucleoside 5'-triphosphate = RNA(n+1) + diphosphate. In terms of biological role, DNA-dependent RNA polymerase catalyzes the transcription of DNA into RNA using the four ribonucleoside triphosphates as substrates. In Erwinia tasmaniensis (strain DSM 17950 / CFBP 7177 / CIP 109463 / NCPPB 4357 / Et1/99), this protein is DNA-directed RNA polymerase subunit beta'.